An 83-amino-acid chain; its full sequence is MYB-like transcription factor ETC1 (83 aa).

The region spanning 35-72 (AQEEEDLICRMYKLVGERWDLIAGRIPGRTAEEIERFW) is the Myb-like domain.

In terms of tissue distribution, expressed in developing trichomes and non-root hair cells.

Its subcellular location is the nucleus. Its function is as follows. MYB-type transcription factor involved in epidermal cell fate specification. Acts as a negative regulator of trichome development, by mediating lateral inhibition. Promotes the formation of hair developing cells in H position in root epidermis, probably by inhibiting non-hair cell formation. The sequence is that of MYB-like transcription factor ETC1 (ETC1) from Arabidopsis thaliana (Mouse-ear cress).